The primary structure comprises 162 residues: MGLETEKADVQLFMDDDSYSRHSGVDYADPDKFADSGSDRDPHRLNSNLKVGFEDVIAEPVSTHSFDKVWICSHALFEISKYVIYKFLTLFLAIPLAFAAGILFATLSCLHIWIIMPFVKTCLMVLPSVQTIWKSITDVVIAPLCTSVGRSFSSVSLQLSHD.

The Cytoplasmic portion of the chain corresponds to 1 to 86 (MGLETEKADV…FEISKYVIYK (86 aa)). Residue Tyr19 is modified to Phosphotyrosine; by SRC. Phosphoserine is present on residues Ser20 and Ser23. Position 27 is a phosphotyrosine; by SRC (Tyr27). At Ser36 the chain carries Phosphoserine. The helical intramembrane region spans 87–107 (FLTLFLAIPLAFAAGILFATL). Topologically, residues 108-162 (SCLHIWIIMPFVKTCLMVLPSVQTIWKSITDVVIAPLCTSVGRSFSSVSLQLSHD) are cytoplasmic.

The protein belongs to the caveolin family. In terms of assembly, monomer or homodimer. Interacts with CAV1; the interaction forms a stable heterooligomeric complex that is required for targeting to lipid rafts and for caveolae formation. Tyrosine phosphorylated forms do not form heterooligomers with the Tyr-19-phosphorylated form existing as a monomer or dimer, and the Tyr-27-form as a monomer only. Interacts (tyrosine phosphorylated form) with the SH2 domain-containing proteins, RASA1, NCK1 and SRC. Interacts (tyrosine phosphorylated form) with INSR, the interaction (Tyr-27-phosphorylated form) is increased on insulin stimulation. Interacts (Tyr-19 phosphorylated form) with MAPK1 (phosphorylated form); the interaction, promoted by insulin, leads to nuclear location and MAPK1 activation. Interacts with STAT3; the interaction is increased on insulin-induced tyrosine phosphorylation leading to STAT activation. Phosphorylated on serine and tyrosine residues. CAV1 promotes phosphorylation on Ser-23 which then targets the complex to the plasma membrane, lipid rafts and caveolae. Phosphorylation on Ser-36 appears to modulate mitosis in endothelial cells. Phosphorylation on both Tyr-19 and Tyr-27 is required for insulin-induced 'Ser-727' phosphorylation of STAT3 and its activation. Phosphorylation on Tyr-19 is required for insulin-induced phosphorylation of MAPK1 and DNA binding of STAT3. Tyrosine phosphorylation is induced by both EGF and insulin (By. similarity).

It is found in the nucleus. Its subcellular location is the cytoplasm. The protein localises to the golgi apparatus membrane. The protein resides in the cell membrane. It localises to the membrane. It is found in the caveola. Functionally, may act as a scaffolding protein within caveolar membranes. Interacts directly with G-protein alpha subunits and can functionally regulate their activity. Acts as an accessory protein in conjunction with CAV1 in targeting to lipid rafts and driving caveolae formation. The Ser-36 phosphorylated form has a role in modulating mitosis in endothelial cells. Positive regulator of cellular mitogenesis of the MAPK signaling pathway. Required for the insulin-stimulated nuclear translocation and activation of MAPK1 and STAT3, and the subsequent regulation of cell cycle progression. This chain is Caveolin-2 (CAV2), found in Neofelis nebulosa (Clouded leopard).